Consider the following 62-residue polypeptide: Negative regulatory protein YxlE (62 aa).

2 helical membrane passes run 7–27 and 37–57; these read MILPLIVLQLALAVFALISCI and WMWAAIIVCINIIGPILFFTV.

It localises to the cell membrane. In terms of biological role, together with YxlD is important for negative regulation of sigma Y activity. The sequence is that of Negative regulatory protein YxlE (yxlE) from Bacillus subtilis (strain 168).